A 746-amino-acid chain; its full sequence is H(+)/Cl(-) exchange transporter 5 (746 aa).

Residues 1–54 (MDFLEEPIPGVGTYDDFNTIDWVREKSRDRDRHREITNRSKESTWALIHSVSDA) are Cytoplasmic-facing. The next 2 membrane-spanning stretches (helical) occupy residues 55-92 (FSGW…ICTE) and 138-161 (VNYF…VKVF). The short motif at 167–171 (GSGIP) is the Selectivity filter part_1 element. S168 lines the chloride pocket. An intramembrane region (helical) is located at residues 170–177 (IPEIKTIL). The next 2 membrane-spanning stretches (helical) occupy residues 186–205 (LGKW…VSSG) and 211–230 (EGPL…HCFN). A Selectivity filter part_2 motif is present at residues 209-213 (GKEGP). Intramembrane regions (helical) lie at residues 242–254 (VLSA…VSVA) and 258–266 (PIGGVLFSL). The next 5 membrane-spanning stretches (helical) occupy residues 278 to 296 (LWRS…RSIN), 319 to 344 (LVPF…IAWC), 352 to 372 (LGKY…ILAF), 428 to 448 (MWQL…TFGM), and 453 to 472 (GLFI…LGVG). Residues 453 to 457 (GLFIP) carry the Selectivity filter part_3 motif. F455 provides a ligand contact to chloride. Positions 500–514 (GLYAMVGAAACLGGV) form an intramembrane region, helical. The segment at residues 515–517 (TRM) is an intramembrane region (note=Loop between two helices). Residues 518–529 (TVSLVVIMFELT) constitute an intramembrane region (helical). An intramembrane region (note=Loop between two helices) is located at residues 530–534 (GGLEY). The chain crosses the membrane as a helical span at residues 535-552 (IVPLMAAAMTSKWVADAL). Residues 553–746 (GREGIYDAHI…NQDPDSILFN (194 aa)) are Cytoplasmic-facing. A chloride-binding site is contributed by Y558. CBS domains lie at 586 to 650 (MKPR…ARKE) and 682 to 742 (ILDL…DPDS). ATP contacts are provided by residues T596, 617-619 (YSG), and 724-727 (TKKD).

The protein belongs to the chloride channel (TC 2.A.49) family. ClC-5/CLCN5 subfamily. Interacts with NEDD4 and NEDD4L. Post-translationally, ubiquitinated by NEDD4L in the presence of albumin; which promotes endocytosis and proteasomal degradation. In terms of tissue distribution, detected in duodenum, jejunum and ileum. Detected in crypt and villus regions of the epithelium of the small intestine.

It localises to the golgi apparatus membrane. The protein localises to the endosome membrane. Its subcellular location is the cell membrane. It catalyses the reaction 2 chloride(in) + H(+)(out) = 2 chloride(out) + H(+)(in). In terms of biological role, proton-coupled chloride transporter. Functions as antiport system and exchanges chloride ions against protons. Important for normal acidification of the endosome lumen. May play an important role in renal tubular function. The CLC channel family contains both chloride channels and proton-coupled anion transporters that exchange chloride or another anion for protons. The absence of conserved gating glutamate residues is typical for family members that function as channels. This is H(+)/Cl(-) exchange transporter 5 (CLCN5) from Cavia porcellus (Guinea pig).